We begin with the raw amino-acid sequence, 212 residues long: Outer-membrane lipoprotein carrier protein (212 aa).

An N-terminal signal peptide occupies residues 1–29; sequence MSSARRRALGFSFQALLLCAAGWHGAAQA.

The protein belongs to the LolA family. As to quaternary structure, monomer.

It is found in the periplasm. In terms of biological role, participates in the translocation of lipoproteins from the inner membrane to the outer membrane. Only forms a complex with a lipoprotein if the residue after the N-terminal Cys is not an aspartate (The Asp acts as a targeting signal to indicate that the lipoprotein should stay in the inner membrane). This chain is Outer-membrane lipoprotein carrier protein, found in Leptothrix cholodnii (strain ATCC 51168 / LMG 8142 / SP-6) (Leptothrix discophora (strain SP-6)).